Reading from the N-terminus, the 748-residue chain is Antigen peptide transporter 1 (748 aa).

The Cytoplasmic portion of the chain corresponds to 1–15 (MASSRCPAPRGCRCL). Residues 16 to 36 (PGASLAWLGTVLLLLADWVLL) traverse the membrane as a helical segment. Residues 37 to 53 (RTALPRIFSLLVPTALP) lie on the Lumenal side of the membrane. Residues 54-76 (LLRVWAVGLSRWAVLWLGACGVL) traverse the membrane as a helical segment. The Cytoplasmic segment spans residues 77 to 92 (RATVGSKSENAGAQGW). A helical transmembrane segment spans residues 93-113 (LAALKPLAAALGLALPGLALF). The Lumenal portion of the chain corresponds to 114–133 (RELISWGAPGSADSTRLLHW). Residues 134–154 (GSHPTAFVVSYAAALPAAALW) form a helical membrane-spanning segment. The Cytoplasmic portion of the chain corresponds to 155–186 (HKLGSLWVPGGQGGSGNPVRRLLGCLGSETRR). Residues 187–207 (LSLFLVLVVLSSLGEMAIPFF) form a helical membrane-spanning segment. An ABC transmembrane type-1 domain is found at 187 to 470 (LSLFLVLVVL…LLSIYPRVQK (284 aa)). Residues 208–227 (TGRLTDWILQDGSADTFTRN) are Lumenal-facing. Residues 228-248 (LTLMSILTIASAVLEFVGDGI) form a helical membrane-spanning segment. The Cytoplasmic portion of the chain corresponds to 249–298 (YNNTMGHVHSHLQGEVFGAVLRQETEFFQQNQTGNIMSRVTEDTSTLSDS). Residues 299-319 (LSENLSLFLWYLVRGLCLLGI) traverse the membrane as a helical segment. At 320 to 328 (MLWGSVSLT) the chain is on the lumenal side. The helical transmembrane segment at 329–349 (MVTLITLPLLFLLPKKVGKWY) threads the bilayer. Topologically, residues 350-418 (QLLEVQVRES…AVNSWTTSIS (69 aa)) are cytoplasmic. The part of the peptide-binding site stretch occupies residues 375 to 420 (PTVRSFANEEGEAQKFREKLQEIKTLNQKEAVAYAVNSWTTSISGM). Residues 419–439 (GMLLKVGILYIGGQLVTSGAV) traverse the membrane as a helical segment. The Lumenal segment spans residues 440 to 443 (SSGN). The helical transmembrane segment at 444-464 (LVTFVLYQMQFTQAVEVLLSI) threads the bilayer. Residues 453–487 (QFTQAVEVLLSIYPRVQKAVGSSEKIFEYLDRTPR) are part of the peptide-binding site. At 465–748 (YPRVQKAVGS…MVQAPADAPE (284 aa)) the chain is on the cytoplasmic side. Positions 503 to 742 (VQFQDVSFAY…KGCYWAMVQA (240 aa)) constitute an ABC transporter domain. ATP contacts are provided by residues 538 to 546 (GPNGSGKST), 641 to 647 (SQLSGGQ), and Q701. Position 545 (S545) interacts with Mg(2+).

Belongs to the ABC transporter superfamily. ABCB family. MHC peptide exporter (TC 3.A.1.209) subfamily. In terms of assembly, heterodimer of TAP1 and TAP2 (TAP1-TAP2). A component of the peptide loading complex (PLC), interacts via TAPBP with MHCI heterodimer; this interaction mediates peptide-MHCI assembly. Recruits TAPBP in a 1:1 stoichiometry. Interacts with classical MHCI such as HLA-A*02-B2M; this interaction is obligatory for the loading of peptide epitopes. Interacts with non-classical MHCI molecules including HLA-E-B2M and HLA-F-B2M as well as PLC component CALR before the peptide loading. Interacts with PSMB5 and PSMB8. (Microbial infection) Interacts with Epstein-Barr virus BNLF2a. As to quaternary structure, (Microbial infection) Interacts with herpes simplex virus US12/ICP47. In terms of assembly, (Microbial infection) Interacts with adenovirus E3-19K glycoprotein, which binds TAP1-TAP2 and acts as a TAPBP inhibitor, preventing TAP1-TAP2 association with MHCI. Mg(2+) serves as cofactor. Highly expressed in professional APCs monocytes and dendritic cells as well as in lymphocyte subsets T cells, B cells and NK cells.

It is found in the endoplasmic reticulum membrane. The catalysed reaction is a peptide antigen(in) + ATP + H2O = a peptide antigen(out) + ADP + phosphate + H(+). Inhibited at high ER lumenal peptide concentrations. With respect to regulation, (Microbial infection) Inhibited by herpes simplex virus US12/ICP47 protein, which blocks the peptide-binding site of TAP1-TAP2. Its activity is regulated as follows. (Microbial infection) Inhibited by human cytomegalovirus US6 glycoprotein, which binds to the lumenal side of TAP1-TAP2 complex and inhibits peptide translocation by specifically blocking ATP-binding and preventing TAP1-TAP2 conformational rearrangement induced by peptide binding. In terms of biological role, ABC transporter associated with antigen processing. In complex with TAP2 mediates unidirectional translocation of peptide antigens from cytosol to endoplasmic reticulum (ER) for loading onto MHC class I (MHCI) molecules. Uses the chemical energy of ATP to export peptides against the concentration gradient. During the transport cycle alternates between 'inward-facing' state with peptide binding site facing the cytosol to 'outward-facing' state with peptide binding site facing the ER lumen. Peptide antigen binding to ATP-loaded TAP1-TAP2 induces a switch to hydrolysis-competent 'outward-facing' conformation ready for peptide loading onto nascent MHCI molecules. Subsequently ATP hydrolysis resets the transporter to the 'inward facing' state for a new cycle. Typically transports intracellular peptide antigens of 8 to 13 amino acids that arise from cytosolic proteolysis via IFNG-induced immunoproteasome. Binds peptides with free N- and C-termini, the first three and the C-terminal residues being critical. Preferentially selects peptides having a highly hydrophobic residue at position 3 and hydrophobic or charged residues at the C-terminal anchor. Proline at position 2 has the most destabilizing effect. As a component of the peptide loading complex (PLC), acts as a molecular scaffold essential for peptide-MHCI assembly and antigen presentation. This Homo sapiens (Human) protein is Antigen peptide transporter 1.